The primary structure comprises 421 residues: Phosphatidylinositol 5-phosphate 4-kinase type-2 gamma (421 aa).

An N-acetylalanine modification is found at alanine 2. Serine 26 is subject to Phosphoserine. The PIPK domain occupies 43 to 420 (AADPLVGVFL…RFLDFITNIF (378 aa)). Positions 69–75 (VMLLPDD) are required for interaction with PIP5K1A. Phosphoserine is present on serine 349.

As to quaternary structure, interacts with PIP5K1A; the interaction inhibits PIP5K1A kinase activity. In terms of processing, phosphorylated, phosphorylation is induced by EGF.

The protein localises to the endoplasmic reticulum. Its subcellular location is the cytoplasm. It catalyses the reaction a 1,2-diacyl-sn-glycero-3-phospho-(1D-myo-inositol-5-phosphate) + ATP = a 1,2-diacyl-sn-glycero-3-phospho-(1D-myo-inositol-4,5-bisphosphate) + ADP + H(+). The enzyme catalyses 1,2-dihexadecanoyl-sn-glycero-3-phospho-(1D-myo-inositol-5-phosphate) + ATP = 1,2-dihexadecanoyl-sn-glycero-3-phospho-(1D-myo-inositol-4,5-bisphosphate) + ADP + H(+). The catalysed reaction is 1,2-dihexadecanoyl-sn-glycero-3-phospho-(1D-myo-inositol-5-phosphate) + GTP = 1,2-dihexadecanoyl-sn-glycero-3-phospho-(1D-myo-inositol-4,5-bisphosphate) + GDP + H(+). Phosphatidylinositol 5-phosphate 4-kinase with low enzymatic activity. May be a GTP sensor, has higher GTP-dependent kinase activity than ATP-dependent kinase activity. PIP4Ks negatively regulate insulin signaling through a catalytic-independent mechanism. They interact with PIP5Ks and suppress PIP5K-mediated PtdIns(4,5)P2 synthesis and insulin-dependent conversion to PtdIns(3,4,5)P3. This chain is Phosphatidylinositol 5-phosphate 4-kinase type-2 gamma (PIP4K2C), found in Pongo abelii (Sumatran orangutan).